Here is a 151-residue protein sequence, read N- to C-terminus: Probable cellulase Cel12b (151 aa).

Active-site residues include glutamate 50 and glutamate 133.

It belongs to the glycosyl hydrolase 12 (cellulase H) family.

Functionally, probable cellulase. Can hydrolyze barley beta-glucan in vitro. Could be important for the survival of M.tuberculosis in the environment, perhaps in amoebal hosts. The protein is Probable cellulase Cel12b of Mycobacterium tuberculosis (strain ATCC 25618 / H37Rv).